A 264-amino-acid polypeptide reads, in one-letter code: Probable glycerol uptake facilitator protein (264 aa).

The next 2 helical transmembrane spans lie at 13–33 and 51–71; these read WIGAEFLGTFFLILSGNGAGS and TAAFAWGIAVLVGVLIANSLF. The NPA 1 motif lies at 78–80; it reads NPA. A run of 3 helical transmembrane segments spans residues 104-124, 162-182, and 195-215; these read IPLLWVALLLAWVAQFAGAML, FATEFVATSVLIASLLVAGSF, and VPMLVVTGLIMSFGAATGTAI. Positions 216-218 match the NPA 2 motif; the sequence is NPA. A helical membrane pass occupies residues 244–264; that stretch reads IPVAAPLSASVILGVLVAVIV.

This sequence belongs to the MIP/aquaporin (TC 1.A.8) family.

It is found in the cell membrane. The enzyme catalyses glycerol(in) = glycerol(out). Functionally, mediates glycerol diffusion across the cytoplasmic membrane via a pore-type mechanism. In Mycoplasma pneumoniae (strain ATCC 29342 / M129 / Subtype 1) (Mycoplasmoides pneumoniae), this protein is Probable glycerol uptake facilitator protein (glpF).